A 338-amino-acid polypeptide reads, in one-letter code: Glycerol-3-phosphate dehydrogenase [NAD(P)+] (338 aa).

Residues S13, W14, and K108 each contribute to the NADPH site. The sn-glycerol 3-phosphate site is built by K108, G139, and S141. A143 lines the NADPH pocket. 5 residues coordinate sn-glycerol 3-phosphate: K194, D247, S257, R258, and N259. K194 functions as the Proton acceptor in the catalytic mechanism. R258 lines the NADPH pocket. NADPH is bound by residues V282 and E284.

The protein belongs to the NAD-dependent glycerol-3-phosphate dehydrogenase family.

The protein resides in the cytoplasm. It carries out the reaction sn-glycerol 3-phosphate + NAD(+) = dihydroxyacetone phosphate + NADH + H(+). The catalysed reaction is sn-glycerol 3-phosphate + NADP(+) = dihydroxyacetone phosphate + NADPH + H(+). It functions in the pathway membrane lipid metabolism; glycerophospholipid metabolism. Functionally, catalyzes the reduction of the glycolytic intermediate dihydroxyacetone phosphate (DHAP) to sn-glycerol 3-phosphate (G3P), the key precursor for phospholipid synthesis. The protein is Glycerol-3-phosphate dehydrogenase [NAD(P)+] of Streptococcus pneumoniae (strain Hungary19A-6).